A 634-amino-acid chain; its full sequence is tRNA uridine 5-carboxymethylaminomethyl modification enzyme MnmG (634 aa).

FAD is bound at residue 13–18 (GAGHAG). 273 to 287 (GPRYCPSIEDKIIKF) is an NAD(+) binding site.

Belongs to the MnmG family. In terms of assembly, homodimer. Heterotetramer of two MnmE and two MnmG subunits. FAD is required as a cofactor.

It localises to the cytoplasm. In terms of biological role, NAD-binding protein involved in the addition of a carboxymethylaminomethyl (cmnm) group at the wobble position (U34) of certain tRNAs, forming tRNA-cmnm(5)s(2)U34. The protein is tRNA uridine 5-carboxymethylaminomethyl modification enzyme MnmG of Buchnera aphidicola subsp. Cinara cedri (strain Cc).